Reading from the N-terminus, the 466-residue chain is Phosphomethylpyrimidine synthase (466 aa).

Substrate-binding positions include Asn80, Met109, Tyr139, His175, 195–197 (SRG), 236–239 (DSLR), and Glu275. Zn(2+) is bound at residue His279. Substrate is bound at residue Tyr302. His343 provides a ligand contact to Zn(2+). Residues Cys423, Cys426, and Cys431 each coordinate [4Fe-4S] cluster.

The protein belongs to the ThiC family. [4Fe-4S] cluster is required as a cofactor.

It carries out the reaction 5-amino-1-(5-phospho-beta-D-ribosyl)imidazole + S-adenosyl-L-methionine = 4-amino-2-methyl-5-(phosphooxymethyl)pyrimidine + CO + 5'-deoxyadenosine + formate + L-methionine + 3 H(+). The protein operates within cofactor biosynthesis; thiamine diphosphate biosynthesis. Its function is as follows. Catalyzes the synthesis of the hydroxymethylpyrimidine phosphate (HMP-P) moiety of thiamine from aminoimidazole ribotide (AIR) in a radical S-adenosyl-L-methionine (SAM)-dependent reaction. This is Phosphomethylpyrimidine synthase from Synechococcus sp. (strain RCC307).